We begin with the raw amino-acid sequence, 227 residues long: 27 kDa glycoprotein (227 aa).

The N-terminal stretch at 1 to 17 is a signal peptide; sequence MMWKTVLITIFAAGVLA. 2 N-linked (GlcNAc...) asparagine glycosylation sites follow: Asn-118 and Asn-173.

This sequence belongs to the UPF0408 family. As to expression, expressed in the subesophageal body, fat bodies, hemocytes, midgut and Malpighian tubules. Not expressed in silk glands.

The protein localises to the secreted. The protein is 27 kDa glycoprotein of Bombyx mori (Silk moth).